Here is a 231-residue protein sequence, read N- to C-terminus: Protein PIMREG (231 aa).

The segment at 1–44 (MASQWQGMRTSVRRRSLLKEEQLEKKEVTRSAGGHPETGPLGSL) is disordered. Phosphoserine is present on residues S11 and S16. 2 consecutive short sequence motifs (D-box) follow at residues 14 to 17 (RRSL) and 53 to 56 (PLRA). Residues 17–29 (LLKEEQLEKKEVT) are compositionally biased toward basic and acidic residues. S72 carries the phosphoserine modification. Disordered regions lie at residues 115-138 (KVRRKRGAQKDRGSPPPSLSQKNT) and 152-197 (HLRL…DLEP). At S128 the chain carries Phosphoserine; by Uhmk1; in vitro. The span at 178 to 190 (PCSSTEPLCSPSE) shows a compositional bias: polar residues. Residues S191 and S193 each carry the phosphoserine modification.

As to quaternary structure, interacts with PICALM; this interaction may target PICALM to the nucleus. During mitosis, associates with HDAC2 and MTA2 subunits of the chromatin-remodeling NuRD complex; this association is strongest at prometaphase and decreases as the cell progresses through metaphase and anaphase. Ubiquitinated by the anaphase-promoting complex/cyclosome (APC/C) complex in the presence of FZR1, leading to its degradation by the proteasome during mitotic exit. However, degradation is not essential for normal mitotic progression within a single cell cycle. Mainly expressed in thymus and ovary. Expressed in all T-cell subpopulations isolated from the thymus, macrophages, pro-erythrocytes, granulocytes, mast cells and progenitor cells.

It is found in the nucleus. It localises to the nucleolus. Its function is as follows. During mitosis, may play a role in the metaphase-to-anaphase transition. The sequence is that of Protein PIMREG from Mus musculus (Mouse).